The primary structure comprises 55 residues: MKKELFDLNLNKDIEAQKSDLNPQSASIVKTTIKASKKLCRGFTLTCGCHFTGKK.

Residues 1-24 (MKKELFDLNLNKDIEAQKSDLNPQ) constitute a propeptide, cleaved by ElxP. Position 25 is a D-lactate; by the dehydratase ElxB and the dehydrogenase ElxO (S25). S27 carries the 2,3-didehydroalanine (Ser); by the dehydratase ElxB modification. A 2,3-didehydrobutyrine; by the dehydratase ElxB mark is found at T31 and T32. Positions 36–40 (SKKLC) form a cross-link, lanthionine (Ser-Cys); by the dehydratase ElxB and the cyclase ElxC. 2 consecutive cross-links (beta-methyllanthionine (Thr-Cys); by the dehydratase ElxB and the cyclase ElxC) follow at residues 44 to 47 (TLTC) and 46 to 49 (TCGC). T52 carries the 2,3-didehydrobutyrine; by the dehydratase ElxB modification.

Maturation of this lantibiotic involves the enzymatic conversion of Thr, and Ser into dehydrated AA by ElxB and the formation of thioether bonds with cysteine by the cyclase ElxC. The next steps are cleavage of the leader peptide by ElxP and membrane translocation by ElxT. The leader peptide may be removed before membrane translocation, in contrast to other lantibiotics for which the cleavage occur after translocation. This is suggested by the probable cytoplasmic localization of the serine protease ElxP that cleaves the leader peptide. In terms of processing, the N-terminal D-lactate is probably produced by dehydration of Ser-25 by ElxB, followed by proteolytic removal of the leader peptide by the serine protease ElxP and hydrolysis of the resulting new N-terminal dehydroalanine. This hydrolysis may occur spontaneously. The pyruvate group thus formed is reduced to D-lactate by the NADPH-dependent oxidoreductase ElxO. This N-terminal D-lactate protects the lantibiotic against degradation against aminopeptidase. Post-translationally, it is not established whether the 2,3-didehydrobutyrines are the E- or Z-isomers.

In terms of biological role, lanthionine-containing peptide antibiotic (lantibiotic) active on Gram-positive bacteria such as staphylococci, enterococci and streptococci. The bactericidal activity of lantibiotics is based on depolarization of energized bacterial cytoplasmic membranes, initiated by the formation of aqueous transmembrane pores. In Staphylococcus epidermidis, this protein is Lantibiotic epilancin 15X.